Here is a 1027-residue protein sequence, read N- to C-terminus: Error-prone DNA polymerase (1027 aa).

This sequence belongs to the DNA polymerase type-C family. DnaE2 subfamily.

It localises to the cytoplasm. It catalyses the reaction DNA(n) + a 2'-deoxyribonucleoside 5'-triphosphate = DNA(n+1) + diphosphate. Its function is as follows. DNA polymerase involved in damage-induced mutagenesis and translesion synthesis (TLS). It is not the major replicative DNA polymerase. The sequence is that of Error-prone DNA polymerase from Dechloromonas aromatica (strain RCB).